The chain runs to 285 residues: Bifunctional protein FolD (285 aa).

NADP(+) is bound by residues 165-167 (GRS) and Ser190.

The protein belongs to the tetrahydrofolate dehydrogenase/cyclohydrolase family. Homodimer.

It carries out the reaction (6R)-5,10-methylene-5,6,7,8-tetrahydrofolate + NADP(+) = (6R)-5,10-methenyltetrahydrofolate + NADPH. It catalyses the reaction (6R)-5,10-methenyltetrahydrofolate + H2O = (6R)-10-formyltetrahydrofolate + H(+). Its pathway is one-carbon metabolism; tetrahydrofolate interconversion. Its function is as follows. Catalyzes the oxidation of 5,10-methylenetetrahydrofolate to 5,10-methenyltetrahydrofolate and then the hydrolysis of 5,10-methenyltetrahydrofolate to 10-formyltetrahydrofolate. The sequence is that of Bifunctional protein FolD from Burkholderia multivorans (strain ATCC 17616 / 249).